A 127-amino-acid polypeptide reads, in one-letter code: Apolipoprotein C-IV (127 aa).

A signal peptide spans Met-1–Cys-27. Asn-63 carries an N-linked (GlcNAc...) asparagine glycan.

Belongs to the apolipoprotein C4 family. In terms of tissue distribution, expressed by the liver and secreted in plasma.

Its subcellular location is the secreted. May participate in lipoprotein metabolism. This is Apolipoprotein C-IV (APOC4) from Homo sapiens (Human).